The following is a 284-amino-acid chain: Tripartite motif-containing protein 12A (284 aa).

The RING-type zinc-finger motif lies at 15–59; sequence CPVCLNLMVKPVSADCGHTFCQGCITLYFESIKCDKKVFICPVCR. The B box-type zinc finger occupies 91 to 132; sequence QKVFNCARHGKKLQLFCRKDMMAICWLCERSQEHRGHKTALI. Positions 96, 99, 118, and 124 each coordinate Zn(2+). Positions 130-234 form a coiled coil; sequence ALIEEVAQEY…QSKLLEDFIS (105 aa).

This sequence belongs to the TRIM/RBCC family. As to expression, expressed in embryonic CNS, liver, kidney, olfactory epithelium.

It is found in the cytoplasm. This chain is Tripartite motif-containing protein 12A (Trim12a), found in Mus musculus (Mouse).